A 634-amino-acid chain; its full sequence is Coilin (634 aa).

Disordered regions lie at residues 87 to 135, 149 to 276, and 342 to 361; these read VSPA…IAEN, PGPS…KLSQ, and GAKS…DSTL. A compositionally biased stretch (polar residues) spans 152-181; that stretch reads SVQSKLLTNKGTPKAPETQTEVSNMSANIE. 2 stretches are compositionally biased toward basic and acidic residues: residues 223 to 234 and 251 to 272; these read TLKEGKMSESKN and KENE…KIPD.

It belongs to the coilin family. In terms of tissue distribution, in egg chambers expressed in the follicle cells, nurse cells and oocyte. Expressed in the larval brain, salivary glands, fat bodies and in the somatic hub cells at the tip of the testis. Expressed in the spermatogonia and spermatocytes, and in the adult ejaculatory duct (at protein level). Expressed in the adult Malpighian tubules.

It is found in the nucleus. It localises to the nucleoplasm. The protein localises to the cajal body. Its subcellular location is the chromosome. The protein resides in the centromere. It is found in the cytoplasm. It localises to the cytoskeleton. The protein localises to the spindle. In terms of biological role, component of nuclear coiled bodies, also known as Cajal bodies or CBs, which are involved in the modification and assembly of nucleoplasmic snRNPs. Required for Cajal body formation. The polypeptide is Coilin (Drosophila melanogaster (Fruit fly)).